A 220-amino-acid polypeptide reads, in one-letter code: Peptide methionine sulfoxide reductase MsrA (220 aa).

The active site involves Cys-54.

The protein belongs to the MsrA Met sulfoxide reductase family.

It catalyses the reaction L-methionyl-[protein] + [thioredoxin]-disulfide + H2O = L-methionyl-(S)-S-oxide-[protein] + [thioredoxin]-dithiol. The enzyme catalyses [thioredoxin]-disulfide + L-methionine + H2O = L-methionine (S)-S-oxide + [thioredoxin]-dithiol. Its function is as follows. Has an important function as a repair enzyme for proteins that have been inactivated by oxidation. Catalyzes the reversible oxidation-reduction of methionine sulfoxide in proteins to methionine. The sequence is that of Peptide methionine sulfoxide reductase MsrA from Salinispora tropica (strain ATCC BAA-916 / DSM 44818 / JCM 13857 / NBRC 105044 / CNB-440).